The primary structure comprises 894 residues: Desmocollin-1 (894 aa).

The N-terminal stretch at 1–29 is a signal peptide; it reads MALASAAPGSIFCKQLLFSLLVLTLLCDA. A propeptide spanning residues 30 to 134 is cleaved from the precursor; the sequence is CQKVYLRVPS…KDTALKRSKR (105 aa). Cadherin domains lie at 135–242, 243–354, 355–471, 472–575, and 576–682; these read RWAP…APYF, EHRV…PPSF, TETS…GPEC, HPPV…DHAP, and QIDK…STRD. Over 135–691 the chain is Extracellular; sequence RWAPIPASLM…DVRPNVILGR (557 aa). Residue Asn-165 is glycosylated (N-linked (GlcNAc...) asparagine). Residue Thr-385 is modified to Phosphothreonine. Asn-546 is a glycosylation site (N-linked (GlcNAc...) asparagine). Residues 692-714 traverse the membrane as a helical segment; that stretch reads WAILAMVLGSVLLLCILFTCFCV. At 715 to 894 the chain is on the cytoplasmic side; that stretch reads TAKRTVKKCF…RTLAKTCIKK (180 aa).

As to quaternary structure, binds to JUP/plakoglobin. As to expression, strongly expressed in epidermis, less in lymph node and tongue.

It localises to the cell membrane. The protein resides in the cell junction. Its subcellular location is the desmosome. Functionally, a component of desmosome cell-cell junctions which are required for positive regulation of cellular adhesion. Required for desmosome adhesion strength between the granular layers of the epidermis, as a result moderates epidermal proliferation and differentiation. Is therefore required to maintain postnatal epidermal barrier function and normal hair follicle morphology into adulthood. The sequence is that of Desmocollin-1 (DSC1) from Homo sapiens (Human).